Consider the following 1488-residue polypeptide: MDNISNHAFNYPVLVLNKGLLPEHDDIALARYLFSALALAVSRITQNEEMIVGFHLHPQEITRWKDDECIRQYILPLNIRFNSATPIAGFIREIMTWMTPDAIHQKNAMGASVLTLGPQHALHDIFDLEISWQPPVESEPVQALTCHVASREDALVLTLRFNPARFSATQMQKLPEVWRQITASAAKNGAETLRDIGLIDDAERQRVLHAFNQTEQAWDGETTVAARLKNRAQRHPEQTAVVFRDETLSYRQLYQQAGALAHYLNALETERERCVGLFVEPSLTLMTGVWGILLSGNAYLPLSPEYPEDRLAYMLENSQTRIIVTQPHLRERLLALAPPGIQVVTSDDVDAFMRQHAHSLPDAPQNDIAPHHLAYVIYTSGSTGKPKGVMIEHHSVLNQMNWLAQTVGLNQETVILQKTPMSFDAAQWEILSPACGCRVVMGEPGVYRNPEQLVDMLAEYRVTTLQCVPTLLQALLDTERLTHCPALRQIFSGGEALQKHLAQACLETLPDCELINLYGPTECTINNSAFRVDPVSVRQGPDTLSIGAPVANTRYYILDNCLTPVAVGQIGELYIGGDGVARGYLNRDDLTAERFIVDPFAPAGSGRRLYQTGDIASWNPDGTVQYAGRADNQVKLRGYRVELDEIRSAIETHEWVKAAAVIVRNDPFTGYQNLISFIELNAREAALMDQGNHGSHHQSKADKAQVMLQLANKGCREFPAASQPYTLDLPGKQPDEKQRLTAFSRKTYRFYDGGAVSREDILSLLHEPLLTAISRQPDALTLDELGHWLRYLGQFTSAERLLPKYTYASPGALYATQVFLELNGVAGLTAGHYYYQPVHHQLVRVSEQAAVTPGSLRLHFVGKKSAIEPIYKNNIREVLQMEMGHIIGMLDIILPDYGLGVALCDAAALDPTPLAIDLDDDYLGACDVLSGPRLPTDDDLDIYVQTAGANIADLPVGTYRYVRGDLQHIADDVIDKKHVIAINQAVYERSSFGISVASRTEGWAGYVHVGRKLQRLQMNPLNIGLMSSGYSSETGNDLPAARRFWQILGHRTGPYYFFIGGRISDEQKYSEGMREDAVHMKGPAEMIRDDLAAFMPDYMMPNKVLILDEMPLTANGKIDMKALANINVELKHKTIVAPRNPLEHQVMAIWQAKLKREEMSVDDNFFESGGNSLIAVSLINELNATLNASLPLQVLFQAPTVEKLAAWLSRARREPVSRLVQLQPKGRQAPIYCWPGLGGYCMNLRLLARQLGAERPFFGIQAHGINPDETPYATIGEMAARDIELIRQHQPHGPYTLWGYSFGARVAFETAWQLELAGEVVENLYLLAPGSPKLRDERVAAMNRKADFDNPGYLTILFSVFIGSITDPELERCLETVRDEESFVAFITGLNPALDDGLVRRITRIVAQTFEFTYTFSELQQRQLNAPVTIIKAQGDDYSFIENHGGFSAQPPTVLELMADHYSMLKAPGIDELTSVIQYQQSPPSLVG.

The segment at 229–585 is adenylation; it reads KNRAQRHPEQ…GGDGVARGYL (357 aa). The 76-residue stretch at 1137 to 1212 folds into the Carrier domain; sequence APRNPLEHQV…KLAAWLSRAR (76 aa). An O-(pantetheine 4'-phosphoryl)serine modification is found at serine 1172. The interval 1230 to 1346 is thioesterase; it reads PIYCWPGLGG…ERVAAMNRKA (117 aa).

It belongs to the ATP-dependent AMP-binding enzyme family. Requires pantetheine 4'-phosphate as cofactor.

The catalysed reaction is 2 FMN + 2 L-glutamine + 2 ATP + O2 = indigoidine + 2 FMNH2 + 2 AMP + 2 diphosphate + 2 H2O. The enzyme catalyses FMN + L-glutamine + ATP = 3-amino-1,5-dihydropyridine-2,6-dione + FMNH2 + AMP + diphosphate. It catalyses the reaction 2 3-amino-1,5-dihydropyridine-2,6-dione + O2 = indigoidine + 2 H2O. It functions in the pathway pigment biosynthesis. Nonribosomal peptide synthetase involved in the biosynthesis of the blue pigment indigoidine, which is implicated in pathogenicity and protection from oxidative stress. Catalyzes the synthesis of the blue pigment using L-Gln as a substrate. Two glutamine molecules are cyclized and oxidized to form indigoidine. In Dickeya dadantii (strain 3937) (Erwinia chrysanthemi (strain 3937)), this protein is Indigoidine synthase.